Consider the following 620-residue polypeptide: bZIP transcription factor 49 (620 aa).

The Cytoplasmic segment spans residues 1 to 287 (MAEPVLEDTY…VAKVKKFKKV (287 aa)). The segment covering 109 to 135 (SSCYNRESPTDSDFSGTSQSLSFSGQD) has biased composition (polar residues). A disordered region spans residues 109-155 (SSCYNRESPTDSDFSGTSQSLSFSGQDSAKRKTEIEEDSSDESRRLG). The bZIP domain occupies 172–235 (EKKKNVRLVR…VTLRQQMGTR (64 aa)). Residues 173–205 (KKKNVRLVRNRESAHLSRQRKKHYVEELEDKVK) are basic motif. The tract at residues 211–218 (ISELSSKM) is leucine-zipper. The helical transmembrane segment at 288 to 308 (ASFSVFGFLFCMFLFGALVNI) threads the bilayer. The Lumenal segment spans residues 309-620 (SYGEYKSNYV…RPDVPHLMTS (312 aa)). Disordered stretches follow at residues 343–364 (DSDQ…PRNS), 398–460 (ARDS…SNDQ), and 505–557 (PASP…RETK). N-linked (GlcNAc...) asparagine glycosylation is found at Asn-351 and Asn-363. The span at 352–364 (VSETENLGPPRNS) shows a compositional bias: polar residues. Basic and acidic residues-rich tracts occupy residues 398–409 (ARDSETKNEEGK) and 432–441 (RTRDVSKHLY). Composition is skewed to polar residues over residues 447–460 (GLSS…SNDQ) and 508–519 (PHTQQCKNTSDT). Residue Asn-515 is glycosylated (N-linked (GlcNAc...) asparagine). An RRIL cleavage motif motif is present at residues 526-529 (RRIL). Asn-539 and Asn-546 each carry an N-linked (GlcNAc...) asparagine glycan. The span at 540 to 557 (LTKEDHNSSSKDKFRETK) shows a compositional bias: basic and acidic residues.

This sequence belongs to the bZIP family. Interacts with BZIP28.

It localises to the endoplasmic reticulum membrane. It is found in the nucleus. Transcriptional activator involved in stress responses. This Arabidopsis thaliana (Mouse-ear cress) protein is bZIP transcription factor 49.